A 346-amino-acid polypeptide reads, in one-letter code: Protein pelota homolog (346 aa).

This sequence belongs to the eukaryotic release factor 1 family. Pelota subfamily. Monomer. The cofactor is a divalent metal cation.

The protein localises to the cytoplasm. Its function is as follows. May function in recognizing stalled ribosomes, interact with stem-loop structures in stalled mRNA molecules, and effect endonucleolytic cleavage of the mRNA. May play a role in the release non-functional ribosomes and degradation of damaged mRNAs. Has endoribonuclease activity. The sequence is that of Protein pelota homolog from Ignicoccus hospitalis (strain KIN4/I / DSM 18386 / JCM 14125).